The primary structure comprises 530 residues: Autoinducer-2 kinase (530 aa).

The protein belongs to the FGGY kinase family.

It is found in the cytoplasm. The enzyme catalyses (S)-4,5-dihydroxypentane-2,3-dione + ATP = (2S)-2-hydroxy-3,4-dioxopentyl phosphate + ADP + H(+). Catalyzes the phosphorylation of autoinducer-2 (AI-2) to phospho-AI-2, which subsequently inactivates the transcriptional regulator LsrR and leads to the transcription of the lsr operon. Phosphorylates the ring-open form of (S)-4,5-dihydroxypentane-2,3-dione (DPD), which is the precursor to all AI-2 signaling molecules, at the C5 position. The chain is Autoinducer-2 kinase from Salmonella typhimurium (strain LT2 / SGSC1412 / ATCC 700720).